Consider the following 362-residue polypeptide: 3-isopropylmalate dehydrogenase (362 aa).

77-88 is a binding site for NAD(+); it reads GPKWGTGAVRPE. Residues arginine 95, arginine 105, arginine 134, and aspartate 223 each contribute to the substrate site. The Mg(2+) site is built by aspartate 223, aspartate 248, and aspartate 252. 287–298 contributes to the NAD(+) binding site; it reads GSAPDLPKGKVN.

This sequence belongs to the isocitrate and isopropylmalate dehydrogenases family. As to quaternary structure, homodimer. It depends on Mg(2+) as a cofactor. The cofactor is Mn(2+).

The protein localises to the cytoplasm. The enzyme catalyses (2R,3S)-3-isopropylmalate + NAD(+) = 4-methyl-2-oxopentanoate + CO2 + NADH. It functions in the pathway amino-acid biosynthesis; L-leucine biosynthesis; L-leucine from 3-methyl-2-oxobutanoate: step 3/4. Functionally, catalyzes the oxidation of 3-carboxy-2-hydroxy-4-methylpentanoate (3-isopropylmalate) to 3-carboxy-4-methyl-2-oxopentanoate. The product decarboxylates to 4-methyl-2 oxopentanoate. This is 3-isopropylmalate dehydrogenase (LEU2) from Zygosaccharomyces bailii.